Here is a 121-residue protein sequence, read N- to C-terminus: Small ribosomal subunit protein uS13 (121 aa).

A disordered region spans residues 94-121; the sequence is GLPLRGQRTRTNARTRKGPRRAAQSLKK.

The protein belongs to the universal ribosomal protein uS13 family. Part of the 30S ribosomal subunit. Forms a loose heterodimer with protein S19. Forms two bridges to the 50S subunit in the 70S ribosome.

In terms of biological role, located at the top of the head of the 30S subunit, it contacts several helices of the 16S rRNA. In the 70S ribosome it contacts the 23S rRNA (bridge B1a) and protein L5 of the 50S subunit (bridge B1b), connecting the 2 subunits; these bridges are implicated in subunit movement. Contacts the tRNAs in the A and P-sites. The polypeptide is Small ribosomal subunit protein uS13 (Paraburkholderia phytofirmans (strain DSM 17436 / LMG 22146 / PsJN) (Burkholderia phytofirmans)).